Here is a 41-residue protein sequence, read N- to C-terminus: Large ribosomal subunit protein bL36 (41 aa).

Belongs to the bacterial ribosomal protein bL36 family.

This chain is Large ribosomal subunit protein bL36, found in Hydrogenovibrio crunogenus (strain DSM 25203 / XCL-2) (Thiomicrospira crunogena).